Consider the following 362-residue polypeptide: Guanine nucleotide-binding protein alpha-10 subunit (362 aa).

Residue glycine 2 is the site of N-myristoyl glycine attachment. Cysteine 4 carries the S-palmitoyl cysteine lipid modification. The G-alpha domain occupies 35–362 (LEQSVLLIGP…QENLKDTGMI (328 aa)). Residues 38-51 (SVLLIGPGESGKST) are G1 motif. Residues 43 to 50 (GPGESGKS), 184 to 190 (VRIRVPT), 209 to 213 (DCGGQ), 278 to 281 (NKID), and alanine 335 contribute to the GTP site. Residues serine 50 and threonine 190 each coordinate Mg(2+). The interval 182–190 (DIVRIRVPT) is G2 motif. The segment at 205–214 (LSVIDCGGQR) is G3 motif. Positions 274–281 (ILFLNKID) are G4 motif. The interval 333–337 (TCAIS) is G5 motif.

Belongs to the G-alpha family. G proteins are composed of 3 units; alpha, beta and gamma. The alpha chain contains the guanine nucleotide binding site.

Functionally, guanine nucleotide-binding proteins (G proteins) are involved as modulators or transducers in various transmembrane signaling systems. The polypeptide is Guanine nucleotide-binding protein alpha-10 subunit (gpa-10) (Caenorhabditis briggsae).